The sequence spans 115 residues: Large ribosomal subunit protein bL19 (115 aa).

Belongs to the bacterial ribosomal protein bL19 family.

This protein is located at the 30S-50S ribosomal subunit interface and may play a role in the structure and function of the aminoacyl-tRNA binding site. The polypeptide is Large ribosomal subunit protein bL19 (Citrobacter koseri (strain ATCC BAA-895 / CDC 4225-83 / SGSC4696)).